Reading from the N-terminus, the 362-residue chain is Malate dehydrogenase (362 aa).

This sequence belongs to the LDH2/MDH2 oxidoreductase family. Homodimer.

The protein resides in the cytoplasm. The catalysed reaction is (S)-malate + NAD(+) = oxaloacetate + NADH + H(+). The protein is Malate dehydrogenase (mdh) of Pyrococcus abyssi (strain GE5 / Orsay).